The sequence spans 307 residues: Probable GTP 3',8-cyclase (307 aa).

The 219-residue stretch at Ala4–Arg222 folds into the Radical SAM core domain. Arg13 contributes to the GTP binding site. [4Fe-4S] cluster-binding residues include Cys20 and Cys24. An S-adenosyl-L-methionine-binding site is contributed by Tyr26. A [4Fe-4S] cluster-binding site is contributed by Cys27. Lys60 contributes to the GTP binding site. S-adenosyl-L-methionine-binding residues include Gly64 and Ser112. Position 150 (Lys150) interacts with GTP. The [4Fe-4S] cluster site is built by Cys240 and Cys243. Arg245 to Arg247 is a binding site for GTP. Cys257 contacts [4Fe-4S] cluster.

This sequence belongs to the radical SAM superfamily. MoaA family. [4Fe-4S] cluster is required as a cofactor.

It catalyses the reaction GTP + AH2 + S-adenosyl-L-methionine = (8S)-3',8-cyclo-7,8-dihydroguanosine 5'-triphosphate + 5'-deoxyadenosine + L-methionine + A + H(+). Its pathway is cofactor biosynthesis; molybdopterin biosynthesis. In terms of biological role, catalyzes the cyclization of GTP to (8S)-3',8-cyclo-7,8-dihydroguanosine 5'-triphosphate. The sequence is that of Probable GTP 3',8-cyclase from Methanopyrus kandleri (strain AV19 / DSM 6324 / JCM 9639 / NBRC 100938).